A 197-amino-acid chain; its full sequence is GTP cyclohydrolase 1 (197 aa).

Zn(2+) is bound by residues cysteine 85, histidine 88, and cysteine 156.

This sequence belongs to the GTP cyclohydrolase I family. In terms of assembly, toroid-shaped homodecamer, composed of two pentamers of five dimers.

The enzyme catalyses GTP + H2O = 7,8-dihydroneopterin 3'-triphosphate + formate + H(+). The protein operates within cofactor biosynthesis; 7,8-dihydroneopterin triphosphate biosynthesis; 7,8-dihydroneopterin triphosphate from GTP: step 1/1. In Mesorhizobium japonicum (strain LMG 29417 / CECT 9101 / MAFF 303099) (Mesorhizobium loti (strain MAFF 303099)), this protein is GTP cyclohydrolase 1.